The following is a 328-amino-acid chain: MPLHNLTRFPRLEFIGAPTPLEYLPRFSDYLGREIFIKRDDVTPMAMGGNKLRKLEFLAADALREGADTLITAGAIQSNHVRQTAAVAAKLGLHCVALLENPIGTTAENYLTNGNRLLLDLFNTQIEMCDALTDPNAQLEVLATRVEAQGFRPYVIPVGGSNALGALGYVESALEIAQQCEGAVNISSVVVASGSAGTHAGLAVGLEHLMPESELIGVTVSRSVADQLPKVVNLQQAIAKELELTASAEILLWDDYFAPGYGVPNDEGMEAVKLLARLEGILLDPVYTGKAMAGLIDGISQKRFKDEGPILFIHTGGAPALFAYHPHV.

N6-(pyridoxal phosphate)lysine is present on Lys-51.

Belongs to the ACC deaminase/D-cysteine desulfhydrase family. Homodimer. The cofactor is pyridoxal 5'-phosphate.

It carries out the reaction D-cysteine + H2O = hydrogen sulfide + pyruvate + NH4(+) + H(+). Catalyzes the alpha,beta-elimination reaction of D-cysteine and of several D-cysteine derivatives. It could be a defense mechanism against D-cysteine. This is D-cysteine desulfhydrase from Escherichia coli O6:H1 (strain CFT073 / ATCC 700928 / UPEC).